Reading from the N-terminus, the 294-residue chain is Elongation factor Ts (294 aa).

Positions 79-82 are involved in Mg(2+) ion dislocation from EF-Tu; that stretch reads TDFV.

This sequence belongs to the EF-Ts family.

The protein localises to the cytoplasm. Associates with the EF-Tu.GDP complex and induces the exchange of GDP to GTP. It remains bound to the aminoacyl-tRNA.EF-Tu.GTP complex up to the GTP hydrolysis stage on the ribosome. The protein is Elongation factor Ts of Geobacillus sp. (strain WCH70).